The sequence spans 30 residues: Cliotide T20 (30 aa).

Positions 1-30 form a cross-link, cyclopeptide (Gly-Asn); that stretch reads GSAIRCGESCLLGKCYTPGCTCDRPICKKN. 3 disulfides stabilise this stretch: C6–C20, C10–C22, and C15–C27.

In terms of processing, contains 3 disulfide bonds. This is a cyclic peptide. In terms of tissue distribution, expressed in root nodules but not in seed.

In terms of biological role, probably participates in a plant defense mechanism. Active against Gram-negative bacterium E.coli ATCC 700926 (MIC=0.5 uM) under low-salt conditions. Not active against Gram-positive bacterium S.aureus ATCC 12600 up to a concentration of 100 uM under low-salt conditions. Exhibits immunomodulatory activity but no cytotoxicity in vitro. The protein is Cliotide T20 of Clitoria ternatea (Butterfly pea).